We begin with the raw amino-acid sequence, 197 residues long: MAVNKVPVLKRCRSLGLEPSYLGYDKKSRRNLTRANRKVSEYGLQLREKQKAKFIYGVLEKPFRNYYKKADQMKGLTGLNLMTILESRIDNVIFRLGFARTRKEARQIVDHKFVTVNGKVVNIPSYLVKAGDVIEIKESKKNTQRMKDIVEVAGGRIVPEWLDVDAEKLQGTVKDLPTREQIDVPVDEMLIVELYSK.

In terms of domain architecture, S4 RNA-binding spans 87–147 (SRIDNVIFRL…ESKKNTQRMK (61 aa)).

The protein belongs to the universal ribosomal protein uS4 family. Part of the 30S ribosomal subunit. Contacts protein S5. The interaction surface between S4 and S5 is involved in control of translational fidelity.

Functionally, one of the primary rRNA binding proteins, it binds directly to 16S rRNA where it nucleates assembly of the body of the 30S subunit. With S5 and S12 plays an important role in translational accuracy. The polypeptide is Small ribosomal subunit protein uS4 (Agathobacter rectalis (strain ATCC 33656 / DSM 3377 / JCM 17463 / KCTC 5835 / VPI 0990) (Eubacterium rectale)).